Here is a 432-residue protein sequence, read N- to C-terminus: Adenylosuccinate synthetase (432 aa).

GTP-binding positions include 12-18 (GDEGKGK) and 40-42 (GHT). The active-site Proton acceptor is D13. Residues D13 and G40 each contribute to the Mg(2+) site. IMP-binding positions include 13–16 (DEGK), 38–41 (NAGH), T132, R146, Q226, T241, and R305. Catalysis depends on H41, which acts as the Proton donor. A substrate-binding site is contributed by 301–307 (TVTGRKR). Residues R307, 333–335 (KLD), and 415–417 (STS) each bind GTP.

This sequence belongs to the adenylosuccinate synthetase family. In terms of assembly, homodimer. It depends on Mg(2+) as a cofactor.

The protein localises to the cytoplasm. The enzyme catalyses IMP + L-aspartate + GTP = N(6)-(1,2-dicarboxyethyl)-AMP + GDP + phosphate + 2 H(+). Its pathway is purine metabolism; AMP biosynthesis via de novo pathway; AMP from IMP: step 1/2. Its function is as follows. Plays an important role in the de novo pathway of purine nucleotide biosynthesis. Catalyzes the first committed step in the biosynthesis of AMP from IMP. In Rhizobium etli (strain ATCC 51251 / DSM 11541 / JCM 21823 / NBRC 15573 / CFN 42), this protein is Adenylosuccinate synthetase.